A 361-amino-acid chain; its full sequence is sn-glycerol-3-phosphate import ATP-binding protein UgpC (361 aa).

The 232-residue stretch at 4 to 235 folds into the ABC transporter domain; sequence LSLKGVRKSY…PATVFVAGFI (232 aa). 37–44 provides a ligand contact to ATP; it reads GPSGCGKS.

Belongs to the ABC transporter superfamily. sn-glycerol-3-phosphate importer (TC 3.A.1.1.3) family. In terms of assembly, the complex is composed of two ATP-binding proteins (UgpC), two transmembrane proteins (UgpA and UgpE) and a solute-binding protein (UgpB).

The protein resides in the cell inner membrane. It catalyses the reaction sn-glycerol 3-phosphate(out) + ATP + H2O = sn-glycerol 3-phosphate(in) + ADP + phosphate + H(+). Functionally, part of the ABC transporter complex UgpBAEC involved in sn-glycerol-3-phosphate (G3P) import. Responsible for energy coupling to the transport system. The polypeptide is sn-glycerol-3-phosphate import ATP-binding protein UgpC (Burkholderia lata (strain ATCC 17760 / DSM 23089 / LMG 22485 / NCIMB 9086 / R18194 / 383)).